Reading from the N-terminus, the 362-residue chain is Dihydroorotate dehydrogenase (quinone) (362 aa).

FMN contacts are provided by residues 62-66 (AGYDK) and threonine 86. Residue lysine 66 participates in substrate binding. 111 to 115 (NRLGF) contributes to the substrate binding site. The FMN site is built by asparagine 139 and asparagine 170. Substrate is bound at residue asparagine 170. The active-site Nucleophile is serine 173. Asparagine 175 lines the substrate pocket. Lysine 215 and serine 243 together coordinate FMN. A substrate-binding site is contributed by 244–245 (NT). Residues glycine 266, glycine 295, and 316–317 (YS) each bind FMN.

This sequence belongs to the dihydroorotate dehydrogenase family. Type 2 subfamily. As to quaternary structure, monomer. Requires FMN as cofactor.

It is found in the cell membrane. The catalysed reaction is (S)-dihydroorotate + a quinone = orotate + a quinol. Its pathway is pyrimidine metabolism; UMP biosynthesis via de novo pathway; orotate from (S)-dihydroorotate (quinone route): step 1/1. Catalyzes the conversion of dihydroorotate to orotate with quinone as electron acceptor. This chain is Dihydroorotate dehydrogenase (quinone), found in Rhizobium leguminosarum bv. trifolii (strain WSM2304).